Reading from the N-terminus, the 947-residue chain is DNA mismatch repair protein MutS (947 aa).

Gly-620–Ser-627 serves as a coordination point for ATP.

It belongs to the DNA mismatch repair MutS family.

Its function is as follows. This protein is involved in the repair of mismatches in DNA. It is possible that it carries out the mismatch recognition step. This protein has a weak ATPase activity. This Clostridioides difficile (strain 630) (Peptoclostridium difficile) protein is DNA mismatch repair protein MutS.